A 443-amino-acid chain; its full sequence is Chromosome partition protein MukF (443 aa).

The leucine-zipper stretch occupies residues 209–237; the sequence is LDETSGNLRELQDTLNAAGDKLQAQLLRI.

Belongs to the MukF family. In terms of assembly, interacts, and probably forms a ternary complex, with MukE and MukB via its C-terminal region. The complex formation is stimulated by calcium or magnesium. It is required for an interaction between MukE and MukB.

The protein resides in the cytoplasm. Its subcellular location is the nucleoid. Involved in chromosome condensation, segregation and cell cycle progression. May participate in facilitating chromosome segregation by condensation DNA from both sides of a centrally located replisome during cell division. Not required for mini-F plasmid partitioning. Probably acts via its interaction with MukB and MukE. Overexpression results in anucleate cells. It has a calcium binding activity. The chain is Chromosome partition protein MukF from Actinobacillus pleuropneumoniae serotype 3 (strain JL03).